The primary structure comprises 153 residues: MRILEGNLIGQDKKFAIVAGRFNEFIVSKLIDGALDAFKRHGVEEDNIDLAWVPGAFEIPLIAKKLAKSGKYAGVVCLGTVIRGATSHYDYVCGEVSKGIANVSLDTEVPVIFGIVTTENIEQAIERAGTKAGNKGFDAAMAAIEMANLLENI.

5-amino-6-(D-ribitylamino)uracil contacts are provided by residues F22, 56 to 58 (AFE), and 80 to 82 (TVI). 85–86 (AT) contacts (2S)-2-hydroxy-3-oxobutyl phosphate. H88 (proton donor) is an active-site residue. A 5-amino-6-(D-ribitylamino)uracil-binding site is contributed by F113. R127 serves as a coordination point for (2S)-2-hydroxy-3-oxobutyl phosphate.

It belongs to the DMRL synthase family.

The enzyme catalyses (2S)-2-hydroxy-3-oxobutyl phosphate + 5-amino-6-(D-ribitylamino)uracil = 6,7-dimethyl-8-(1-D-ribityl)lumazine + phosphate + 2 H2O + H(+). Its pathway is cofactor biosynthesis; riboflavin biosynthesis; riboflavin from 2-hydroxy-3-oxobutyl phosphate and 5-amino-6-(D-ribitylamino)uracil: step 1/2. Functionally, catalyzes the formation of 6,7-dimethyl-8-ribityllumazine by condensation of 5-amino-6-(D-ribitylamino)uracil with 3,4-dihydroxy-2-butanone 4-phosphate. This is the penultimate step in the biosynthesis of riboflavin. In Clostridium perfringens (strain ATCC 13124 / DSM 756 / JCM 1290 / NCIMB 6125 / NCTC 8237 / Type A), this protein is 6,7-dimethyl-8-ribityllumazine synthase.